Consider the following 138-residue polypeptide: Protein PsiE homolog (138 aa).

Helical transmembrane passes span 14–34 (LQAL…GLLI), 56–76 (YEML…ALII), 84–104 (HFPL…LIII), and 109–129 (AIST…FFIV).

Belongs to the PsiE family.

The protein resides in the cell membrane. This chain is Protein PsiE homolog, found in Bacillus velezensis (strain DSM 23117 / BGSC 10A6 / LMG 26770 / FZB42) (Bacillus amyloliquefaciens subsp. plantarum).